The sequence spans 24 residues: Large ribosomal subunit protein uL30 (24 aa).

The protein belongs to the universal ribosomal protein uL30 family. As to quaternary structure, part of the 50S ribosomal subunit.

This is Large ribosomal subunit protein uL30 (rpmD) from Ectopseudomonas mendocina (Pseudomonas mendocina).